A 582-amino-acid chain; its full sequence is MITRMSELFLRTLRDDPADAEVPSHKLLIRAGYIRPVGPGLYSWLPLGLRVLRNIERVIREEMNAIGGQEILFPALLPRAPYETTNRWTEYGDGVFRLEDRRGNDYLLGPTHEELFTLTVKGEYNSYKDFPLTLYQIQIKYRDEARPRAGILRAREFVMKDSYSFDIDSGGLKAAYHAHREAYQRIFDRLRVRYVIVSAVSGAMGGSASEEFLAESPVGEDTFVRCVESGYAANVEAVVTARPESLPIDGQPDAVVHDTGETPTIATLVAWANEAGLGREVSAADTLKNVLMKIRQPGGEWELLAIGVPGDREIDEKRLAAALDPAEYVFLDDDDFGKYPFLVKGYIGPKALRSNDVRYLLDPRVVDGTSWITGADEPGRHVVGLVAGRDFTADGTIEAAEVREGDPAPDGAGQLVMARGIEIGHIFQLGRKYTDAFTADVLGEDGKPVRLTMGSYGIGVSRLVAVIAEQHHDNLGLRWPAEIAPFGVHLVIANKDAEARAGAIGLAGELDGLGVEVLLDDRQASPGVKFKDAELLGMPWVVVVGRGWADGVVELRDRFGGQTRELTVGDSLATDIAAAISG.

It belongs to the class-II aminoacyl-tRNA synthetase family. ProS type 1 subfamily. As to quaternary structure, homodimer.

It localises to the cytoplasm. The catalysed reaction is tRNA(Pro) + L-proline + ATP = L-prolyl-tRNA(Pro) + AMP + diphosphate. Functionally, catalyzes the attachment of proline to tRNA(Pro) in a two-step reaction: proline is first activated by ATP to form Pro-AMP and then transferred to the acceptor end of tRNA(Pro). As ProRS can inadvertently accommodate and process non-cognate amino acids such as alanine and cysteine, to avoid such errors it has two additional distinct editing activities against alanine. One activity is designated as 'pretransfer' editing and involves the tRNA(Pro)-independent hydrolysis of activated Ala-AMP. The other activity is designated 'posttransfer' editing and involves deacylation of mischarged Ala-tRNA(Pro). The misacylated Cys-tRNA(Pro) is not edited by ProRS. The protein is Proline--tRNA ligase of Mycobacterium ulcerans (strain Agy99).